We begin with the raw amino-acid sequence, 842 residues long: MSKYDFKKIEKKWQNYWDKHKTYKVNEDPNVPKEKRIYILDMFPYPSANGLHVGHPEGYTATDILTRYKLLNGFNVLHPMGFDSFGLPAENYAIQTGKHPKKITEKNIEKFKEQIKALGFAYDWDREIKTHDVNYYKWTQWIFLQLYKKGLAYTKEIPVWYCPDLGTVLANEEVIQTPDGPRSERGFHKVERKPLRQWLLKITKYAERLIRDLEEVDWPDSVKEMQKNWIGKSTGVEIEFLIKESKEKIKVFTTRPDTIFGVTYLVLAPEHPMVDKITKDELKPIISKYKDKEILKSDLERTSLEKDKTGIFTGAYAINPITKEEIPIWIGSYILGTYGTGAVMSVPAHDERDFEFAKKYNLPIKQVVSQTGTNEVLIKPFTENGISINTPTEFNNLKTIEVKTKVIKWLIENKMGQEKVNYKLRDWIFSRQRYWGEPIPILFDDNLNEIPLNDDELPLTLPDIENYKPSGTGESPLSKIKDWVNVKRNGKIYKRETNTMPQWAGSCWYYIRYLDPHNKKEFANKEKINYWMPVDLYIGGAEHSVLHLLYARFWHKVLYDLGYVNTKEPFRKLINQGMITSFAYQDENGILIPNDEVEKKDNKFFSKKNNKELKQIIAKMSKSLKNIINPDDIIKEYGADSMRIYEMFMGPLTDSKPWNTQGLIGIFRFLNKIWLIKNKELTNETPPKEIISELHKTIKKVTEDIETLNFNTAISTLMIFINELLKHEKNYLKIFRPISIILSPFAPHLGEELWEFMGEQSSIFKNAKWPKYDLNSIIDDTREIVLQVNGKTKDKIMIKKDTDEETLKKIAFNNQKIIQNINNKQIIKIITVKDKLVNIVAK.

The 'HIGH' region signature appears at 44 to 55; that stretch reads PYPSANGLHVGH. The 'KMSKS' region signature appears at 619–623; the sequence is KMSKS. Residue Lys-622 coordinates ATP.

This sequence belongs to the class-I aminoacyl-tRNA synthetase family.

It is found in the cytoplasm. It catalyses the reaction tRNA(Leu) + L-leucine + ATP = L-leucyl-tRNA(Leu) + AMP + diphosphate. In Borrelia duttonii (strain Ly), this protein is Leucine--tRNA ligase.